The chain runs to 311 residues: Acetyl-coenzyme A carboxylase carboxyl transferase subunit alpha (311 aa).

The 253-residue stretch at 34–286 (EKDLQKEASK…KEYYLQNIRE (253 aa)) folds into the CoA carboxyltransferase C-terminal domain.

The protein belongs to the AccA family. In terms of assembly, acetyl-CoA carboxylase is a heterohexamer composed of biotin carboxyl carrier protein (AccB), biotin carboxylase (AccC) and two subunits each of ACCase subunit alpha (AccA) and ACCase subunit beta (AccD).

It is found in the cytoplasm. It carries out the reaction N(6)-carboxybiotinyl-L-lysyl-[protein] + acetyl-CoA = N(6)-biotinyl-L-lysyl-[protein] + malonyl-CoA. Its pathway is lipid metabolism; malonyl-CoA biosynthesis; malonyl-CoA from acetyl-CoA: step 1/1. In terms of biological role, component of the acetyl coenzyme A carboxylase (ACC) complex. First, biotin carboxylase catalyzes the carboxylation of biotin on its carrier protein (BCCP) and then the CO(2) group is transferred by the carboxyltransferase to acetyl-CoA to form malonyl-CoA. The protein is Acetyl-coenzyme A carboxylase carboxyl transferase subunit alpha of Nitratiruptor sp. (strain SB155-2).